A 347-amino-acid polypeptide reads, in one-letter code: NADH-ubiquinone oxidoreductase chain 2 (347 aa).

The next 11 membrane-spanning stretches (helical) occupy residues 3–23, 25–45, 59–79, 96–116, 127–147, 149–169, 178–198, 201–221, 239–259, 274–294, and 326–346; these read PMTF…VLLS, HWFM…PVLM, YFLT…INTM, ILIT…FWVP, GLIL…QIYP, LNTN…GWGG, IMAY…TYNP, SLLN…LLII, IVTT…PLTG, NSLI…FFYM, and TAPL…LITL.

The protein belongs to the complex I subunit 2 family. In terms of assembly, core subunit of respiratory chain NADH dehydrogenase (Complex I) which is composed of 45 different subunits. Interacts with TMEM242.

Its subcellular location is the mitochondrion inner membrane. The enzyme catalyses a ubiquinone + NADH + 5 H(+)(in) = a ubiquinol + NAD(+) + 4 H(+)(out). In terms of biological role, core subunit of the mitochondrial membrane respiratory chain NADH dehydrogenase (Complex I) which catalyzes electron transfer from NADH through the respiratory chain, using ubiquinone as an electron acceptor. Essential for the catalytic activity and assembly of complex I. In Sylvisorex ollula (Greater forest shrew), this protein is NADH-ubiquinone oxidoreductase chain 2.